The sequence spans 226 residues: Ribonuclease 3 (226 aa).

One can recognise an RNase III domain in the interval 7–129 (LPRLCRTLGY…IIGAVYLDAD (123 aa)). A Mg(2+)-binding site is contributed by Glu-42. Asp-46 is an active-site residue. The Mg(2+) site is built by Asp-115 and Glu-118. The active site involves Glu-118. The DRBM domain maps to 156 to 226 (DAKTLLQEYL…AAQVLELLNQ (71 aa)).

Belongs to the ribonuclease III family. Homodimer. Mg(2+) serves as cofactor.

It localises to the cytoplasm. The enzyme catalyses Endonucleolytic cleavage to 5'-phosphomonoester.. In terms of biological role, digests double-stranded RNA. Involved in the processing of primary rRNA transcript to yield the immediate precursors to the large and small rRNAs (23S and 16S). Processes some mRNAs, and tRNAs when they are encoded in the rRNA operon. Processes pre-crRNA and tracrRNA of type II CRISPR loci if present in the organism. The polypeptide is Ribonuclease 3 (Shewanella amazonensis (strain ATCC BAA-1098 / SB2B)).